A 31-amino-acid chain; its full sequence is Cyclotide mra3 (31 aa).

3 cysteine pairs are disulfide-bonded: cysteine 5-cysteine 21, cysteine 9-cysteine 23, and cysteine 14-cysteine 28.

In terms of processing, this is a cyclic peptide. Post-translationally, contains 3 disulfide bonds.

Functionally, probably participates in a plant defense mechanism. This is Cyclotide mra3 from Melicytus ramiflorus (Whitey wood).